We begin with the raw amino-acid sequence, 356 residues long: Alpha-N-acetylneuraminide alpha-2,8-sialyltransferase (356 aa).

At 1-29 the chain is on the cytoplasmic side; it reads MSPCGRARRQTSRGAMAVLAWKFPRTRLP. A helical; Signal-anchor for type II membrane protein membrane pass occupies residues 30-48; sequence MGASALCVVVLCWLYIFPV. The Lumenal segment spans residues 49–356; sequence YRLPNEKEIV…CEDTSLQPTS (308 aa). N-linked (GlcNAc...) asparagine glycans are attached at residues Asn71 and Asn119. Disulfide bonds link Cys138/Cys287 and Cys152/Cys347. Residues Asn143 and Asn166 each coordinate CMP-N-acetyl-beta-neuraminate. Asn214 and Asn245 each carry an N-linked (GlcNAc...) asparagine glycan. Ser274, Thr275, Gly276, Trp296, and His310 together coordinate CMP-N-acetyl-beta-neuraminate. His322 acts as the Proton donor/acceptor in catalysis.

Belongs to the glycosyltransferase 29 family. In terms of tissue distribution, strongly expressed in melanoma cell lines, adult and fetal brain and to a lesser extent in adult and fetal lung.

The protein resides in the golgi apparatus membrane. The enzyme catalyses an N-acetyl-alpha-neuraminyl-(2-&gt;3)-beta-D-galactosyl derivative + CMP-N-acetyl-beta-neuraminate = an N-acetyl-alpha-neuraminyl-(2-&gt;8)-N-acetyl-alpha-neuraminyl-(2-&gt;3)-beta-D-galactosyl derivative + CMP + H(+). It carries out the reaction a ganglioside GM3 (d18:1(4E)) + CMP-N-acetyl-beta-neuraminate = a ganglioside GD3 (d18:1(4E)) + CMP + H(+). The catalysed reaction is a ganglioside GD3 (d18:1(4E)) + CMP-N-acetyl-beta-neuraminate = a ganglioside GT3 (d18:1(4E)) + CMP + H(+). It catalyses the reaction a ganglioside GD1a (d18:1(4E)) + CMP-N-acetyl-beta-neuraminate = a ganglioside GT1a (d18:1(4E)) + CMP + H(+). The enzyme catalyses a ganglioside GT1b (d18:1(4E)) + CMP-N-acetyl-beta-neuraminate = a ganglioside GQ1b (d18:1(4E)) + CMP + H(+). It carries out the reaction a ganglioside GM1b (d18:1(4E)) + CMP-N-acetyl-beta-neuraminate = a ganglioside GD1c (d18:1(4E)) + CMP + H(+). The catalysed reaction is a ganglioside GD3 + CMP-N-acetyl-beta-neuraminate = a ganglioside GT3 + CMP + H(+). It catalyses the reaction [alpha-N-acetylneuraminyl-(2-&gt;8)](n)-alpha-N-acetylneuraminyl-(2-&gt;8)-alpha-N-acetylneuraminyl-(2-&gt;3)-beta-D-galactosyl-(1-&gt;4)-beta-D-glucosyl-(1&lt;-&gt;1)-ceramide + CMP-N-acetyl-beta-neuraminate = [alpha-N-acetylneuraminyl-(2-&gt;8)](n+1)-alpha-N-acetylneuraminyl-(2-&gt;8)-alpha-N-acetylneuraminyl-(2-&gt;3)-beta-D-galactosyl-(1-&gt;4)-beta-D-glucosyl-(1&lt;-&gt;1)-ceramide + CMP + H(+). It functions in the pathway protein modification; protein glycosylation. It participates in lipid metabolism; sphingolipid metabolism. Its function is as follows. Catalyzes the addition of sialic acid in alpha 2,8-linkage to the sialic acid moiety of the ganglioside GM3 to form ganglioside GD3; gangliosides are a subfamily of complex glycosphingolipds that contain one or more residues of sialic acid. Can catalyze the addition of a second alpha-2,8-sialic acid to GD3 to form GT3. Can use GM1b, GD1a and GT1b as acceptor substrates to synthesize GD1c, GT1a and GQ1b respectively. Can synthesize unusual tetra- and pentasialylated lactosylceramide derivatives identified as GQ3 (II3Neu5Ac4-Gg2Cer) and GP3 (II3Neu5Ac5-Gg2Cer) in breast cancer cells. The protein is Alpha-N-acetylneuraminide alpha-2,8-sialyltransferase of Homo sapiens (Human).